A 183-amino-acid polypeptide reads, in one-letter code: Small ribosomal subunit protein uS4 (183 aa).

Residues 106-168 (RRLQTQVYRQ…AGSPLAREGH (63 aa)) form the S4 RNA-binding domain.

The protein belongs to the universal ribosomal protein uS4 family. As to quaternary structure, part of the 30S ribosomal subunit. Contacts protein S5. The interaction surface between S4 and S5 is involved in control of translational fidelity.

Functionally, one of the primary rRNA binding proteins, it binds directly to 16S rRNA where it nucleates assembly of the body of the 30S subunit. In terms of biological role, with S5 and S12 plays an important role in translational accuracy. The protein is Small ribosomal subunit protein uS4 of Methanothrix thermoacetophila (strain DSM 6194 / JCM 14653 / NBRC 101360 / PT) (Methanosaeta thermophila).